The following is a 333-amino-acid chain: Probable tRNA pseudouridine synthase B (333 aa).

A compositionally biased stretch (basic and acidic residues) spans 1–14 (MKCPSREVFSKFEE). The interval 1–27 (MKCPSREVFSKFEESTNPQWGKPPSQR) is disordered. The active-site Nucleophile is the Asp71. A PUA domain is found at 238 to 313 (LPKIWVRDSA…LVARTDRVVM (76 aa)).

This sequence belongs to the pseudouridine synthase TruB family. Type 2 subfamily.

It carries out the reaction uridine(55) in tRNA = pseudouridine(55) in tRNA. Its function is as follows. Could be responsible for synthesis of pseudouridine from uracil-55 in the psi GC loop of transfer RNAs. This chain is Probable tRNA pseudouridine synthase B, found in Pyrobaculum aerophilum (strain ATCC 51768 / DSM 7523 / JCM 9630 / CIP 104966 / NBRC 100827 / IM2).